Reading from the N-terminus, the 187-residue chain is Cytochrome b-245 chaperone 1 (187 aa).

The chain crosses the membrane as a helical span at residues 20–42 (GIRSWSLLVGILSTGLAAAYYSG). Residues 167 to 187 (ESPSERSQSSDSEPDGPGGQS) are disordered. Ser168 and Ser170 each carry phosphoserine.

This sequence belongs to the CYBC1 family. Interacts with CYBB; CYBC1 may act as a chaperone stabilizing Cytochrome b-245 heterodimer.

The protein resides in the endoplasmic reticulum membrane. Functions as a chaperone necessary for a stable expression of the CYBA and CYBB subunits of the cytochrome b-245 heterodimer. Controls the phagocyte respiratory burst and is essential for innate immunity. The sequence is that of Cytochrome b-245 chaperone 1 from Rattus norvegicus (Rat).